We begin with the raw amino-acid sequence, 302 residues long: Probable 2-(5''-triphosphoribosyl)-3'-dephosphocoenzyme-A synthase (302 aa).

Belongs to the CitG/MdcB family.

It catalyses the reaction 3'-dephospho-CoA + ATP = 2'-(5''-triphospho-alpha-D-ribosyl)-3'-dephospho-CoA + adenine. This Citrobacter koseri (strain ATCC BAA-895 / CDC 4225-83 / SGSC4696) protein is Probable 2-(5''-triphosphoribosyl)-3'-dephosphocoenzyme-A synthase.